We begin with the raw amino-acid sequence, 210 residues long: Protein LURP-one-related 5 (210 aa).

This sequence belongs to the LOR family.

Its function is as follows. Might be related to the phospholipid scramblase and tubby-like superfamily of membrane tethered transcription factors. The protein is Protein LURP-one-related 5 of Arabidopsis thaliana (Mouse-ear cress).